Here is a 96-residue protein sequence, read N- to C-terminus: Large ribosomal subunit protein uL18m (96 aa).

Belongs to the universal ribosomal protein uL18 family.

The protein resides in the mitochondrion. The chain is Large ribosomal subunit protein uL18m (RPL18) from Reclinomonas americana.